The sequence spans 885 residues: Alanine--tRNA ligase (885 aa).

Residues H571, H575, C674, and H678 each coordinate Zn(2+).

Belongs to the class-II aminoacyl-tRNA synthetase family. Zn(2+) serves as cofactor.

Its subcellular location is the cytoplasm. The enzyme catalyses tRNA(Ala) + L-alanine + ATP = L-alanyl-tRNA(Ala) + AMP + diphosphate. Functionally, catalyzes the attachment of alanine to tRNA(Ala) in a two-step reaction: alanine is first activated by ATP to form Ala-AMP and then transferred to the acceptor end of tRNA(Ala). Also edits incorrectly charged Ser-tRNA(Ala) and Gly-tRNA(Ala) via its editing domain. The protein is Alanine--tRNA ligase of Clavibacter michiganensis subsp. michiganensis (strain NCPPB 382).